The chain runs to 413 residues: DNA polymerase IV 1 (413 aa).

The UmuC domain maps to 7–188 (IFHVDMNSFY…LPIEEMYGIG (182 aa)). 2 residues coordinate Mg(2+): D11 and D107. E108 is an active-site residue.

This sequence belongs to the DNA polymerase type-Y family. Monomer. Mg(2+) is required as a cofactor.

The protein localises to the cytoplasm. It catalyses the reaction DNA(n) + a 2'-deoxyribonucleoside 5'-triphosphate = DNA(n+1) + diphosphate. Its function is as follows. Poorly processive, error-prone DNA polymerase involved in untargeted mutagenesis. Copies undamaged DNA at stalled replication forks, which arise in vivo from mismatched or misaligned primer ends. These misaligned primers can be extended by PolIV. Exhibits no 3'-5' exonuclease (proofreading) activity. May be involved in translesional synthesis, in conjunction with the beta clamp from PolIII. The polypeptide is DNA polymerase IV 1 (dinB1) (Halalkalibacterium halodurans (strain ATCC BAA-125 / DSM 18197 / FERM 7344 / JCM 9153 / C-125) (Bacillus halodurans)).